The chain runs to 229 residues: Putative N-acetylmannosamine-6-phosphate 2-epimerase (229 aa).

It belongs to the NanE family.

The catalysed reaction is an N-acyl-D-glucosamine 6-phosphate = an N-acyl-D-mannosamine 6-phosphate. It participates in amino-sugar metabolism; N-acetylneuraminate degradation; D-fructose 6-phosphate from N-acetylneuraminate: step 3/5. In terms of biological role, converts N-acetylmannosamine-6-phosphate (ManNAc-6-P) to N-acetylglucosamine-6-phosphate (GlcNAc-6-P). This chain is Putative N-acetylmannosamine-6-phosphate 2-epimerase, found in Escherichia fergusonii (strain ATCC 35469 / DSM 13698 / CCUG 18766 / IAM 14443 / JCM 21226 / LMG 7866 / NBRC 102419 / NCTC 12128 / CDC 0568-73).